A 1140-amino-acid chain; its full sequence is DNA damage-binding protein 1 (1140 aa).

Residues 13–356 (TAVNGCVTGH…VVAMETFTNL (344 aa)) form a WD repeat beta-propeller A region. A WD repeat beta-propeller B; Interaction with CUL4A region spans residues 391–708 (RNGIGIHEHA…LTIGTIDEIQ (318 aa)). Residues 709–1043 (KLHIRTVPLY…NGMIGLVTSL (335 aa)) are WD repeat beta-propeller C.

Belongs to the DDB1 family. Component of the UV-DDB complex which includes DDB1 and DDB2. Component of numerous DCX (DDB1-CUL4-X-box) E3 ubiquitin-protein ligase complexes which consist of a core of DDB1, CUL4A or CUL4B and RBX1, and a substrate receptor, such as CRBN. DDB1 may recruit specific substrate targeting subunits to the DCX complex. These substrate targeting subunits are generally known as DCAF (DDB1- and CUL4-associated factor) or CDW (CUL4-DDB1-associated WD40-repeat) proteins.

Its subcellular location is the cytoplasm. The protein localises to the nucleus. It functions in the pathway protein modification; protein ubiquitination. Protein, which is both involved in DNA repair and protein ubiquitination, as part of the UV-DDB complex and DCX (DDB1-CUL4-X-box) complexes, respectively. Core component of the UV-DDB complex (UV-damaged DNA-binding protein complex), a complex that recognizes UV-induced DNA damage and recruit proteins of the nucleotide excision repair pathway (the NER pathway) to initiate DNA repair. The UV-DDB complex may recognize UV-induced DNA damage and recruit proteins of the nucleotide excision repair pathway (the NER pathway) to initiate DNA repair. Also functions as a component of numerous distinct DCX (DDB1-CUL4-X-box) E3 ubiquitin-protein ligase complexes which mediate the ubiquitination and subsequent proteasomal degradation of target proteins. The functional specificity of the DCX E3 ubiquitin-protein ligase complex is determined by the variable substrate recognition component recruited by DDB1. May play a role in the regulation of the circadian clock. This is DNA damage-binding protein 1 (DDB1) from Gallus gallus (Chicken).